Reading from the N-terminus, the 594-residue chain is CRISPR-associated DNA-binding protein Cas12m (594 aa).

Residues 1–85 (MSRLEARTRY…EKVRQVMVFE (85 aa)) are recognition domain (REC1-N). The segment at 86 to 153 (SETTKKIKEL…ERSFIFEARK (68 aa)) is recognition domain (REC2). The tract at residues 154-211 (QELAQLEKERWAVVKELGKGSGLYWCNLEDVVNSYDIGRKKAKAAGGEMRFHRWDGTG) is recognition domain (REC1-C). Residues 212–314 (KVTVRFQKGL…RYKLNLVLEI (103 aa)) form a wedge domain (WED) region. The linker stretch occupies residues 315 to 329 (LGENTNRILPALEGT). Residues 330-540 (AAIDLGWRTV…KNHVEFTYVP (211 aa)) are ruvC-I. Residues 541-575 (AENTTITCHKCGHKEKFDAAAQIIHTCSTCGELWD) form a target nucleic-acid binding (TNB) region. Zn(2+) contacts are provided by cysteine 548, cysteine 551, cysteine 567, and cysteine 570. Residues 576-594 (QDYNAAKNLLAFSQKGGVK) are ruvC-II. Aspartate 577 contacts Mg(2+).

This sequence belongs to the CRISPR-associated DNA-binding protein Cas12m family. Requires Mg(2+) as cofactor. It depends on Zn(2+) as a cofactor.

CRISPR (clustered regularly interspaced short palindromic repeat), is an adaptive immune system that provides protection against mobile genetic elements (viruses, transposable elements and conjugative plasmids). CRISPR clusters contain sequences complementary to antecedent mobile elements and target invading nucleic acids. CRISPR clusters are transcribed and processed into CRISPR RNA (crRNA). Recognizes a short motif in the CRISPR repeat sequences (the 5' PAM or protospacer adjacent motif, 5'-C/TCN-3' in this organism) to help distinguish self versus nonself, as targets within the bacterial CRISPR locus do not have PAMs. Upon expression in E.coli as a CRISPR locus inhibits plasmid propagation when targeted to regions essential for plasmid propagation (replication origin but not a selectable marker), probably by inhibiting transcription. Cas12m-crRNA binds DNA in a PAM-dependent, crRNA-guided fashion. Upon expression in E.coli as a CRISPR region preferentially binds to its associated crRNA. Probably required for pre-crRNA processing to mature crRNA. The sequence is that of CRISPR-associated DNA-binding protein Cas12m from Thermanaerosceptrum fracticalcis.